Here is a 729-residue protein sequence, read N- to C-terminus: MATADEFSDEDTSPIEEVRLTVTNTDDPTLPVWTFRMWFLGLISCSLLSFLNQFFSYRTEPLVITQITVQVATLPIGHFLAKVLPKTRFGLPGCGSARFSLNPGPFNMKEHVLISIFANAGSAFGSGSAYAVGIITIIKAFYGRSISFIAGWLLIITTQVLGYGWAGLLRKYVVEPAHMWWPSTLVQVSLFRALHEKDDQRMTRAKFFVIALVCSFGWYIVPGYLFTTLTSISWVCWAFPRSVTAQQIGSGMRGLGLGAFTLDWTAVASFLFSPLISPFFAIANVFIGYVLLIYFVLPLAYWGFDSYNATRFPIFSSHLFTSVGNTYDIPAIVNDNFELDLAKYEQQGRINLSMFFALTYGLGFATIASTLTHVALFYGKEISERFRVSYKGKEDIHTRLMKRYKDIPSWWFYSMLAATLLISLALCVFLNDEVQMPWWGLVFASAMAFVFTLPISIITATTNQTPGLNIITEYAMGLIYPGRPIANVCFKVYGYMSMAQAVSFLNDFKLGHYMKIPPRSMFLVQFIGTILAGTINITVAWWQLNSIKNICQEELLPPNSPWTCPGDRVFFDASVIWGLVGPKRIFGSQGNYAAMNWFFLGGALGPVIVWSLHKAFPKRSWIPLVNLPVLLGATAMMPPATAVNYNSWILVGTIFNLFVFRYRKSWWQRYNYVLSAAMDAGVAFMAVLLYFSVGMEEKSLDWWGTRGEHCDLAKCPTARGVIVDGCPVK.

An N-acetylalanine modification is found at A2. At S8 the chain carries Phosphoserine. Helical transmembrane passes span 37–57, 61–81, 123–143, 148–168, 177–194, 207–227, 256–276, 279–299, 352–372, 410–430, 438–458, 522–542, 592–612, 621–637, 640–660, and 673–693; these read MWFL…FFSY, PLVI…HFLA, AFGS…AFYG, FIAG…WAGL, AHMW…FRAL, FFVI…YLFT, GLGA…SPLI, FFAI…VLPL, LSMF…STLT, WWFY…CVFL, WWGL…ISII, FLVQ…VAWW, YAAM…VWSL, WIPL…TAMM, ATAV…LFVF, and VLSA…YFSV.

It belongs to the oligopeptide OPT transporter (TC 2.A.67.1) family. Expressed in flowers, leaves, roots, and stems.

It is found in the membrane. Functionally, involved in the translocation of tetra- and pentapeptides across the cellular membrane in an energy-dependent manner. The chain is Oligopeptide transporter 4 (OPT4) from Arabidopsis thaliana (Mouse-ear cress).